The primary structure comprises 314 residues: Short-chain dehydrogenase/reductase drtF (314 aa).

Positions 26, 50, 73, 100, 185, and 189 each coordinate NADP(+). Residue Y185 is the Proton acceptor of the active site. K189 serves as the catalytic Lowers pKa of active site Tyr.

The protein belongs to the short-chain dehydrogenases/reductases (SDR) family.

It participates in secondary metabolite biosynthesis; terpenoid biosynthesis. Its function is as follows. Short-chain dehydrogenase/reductase; part of the gene cluster that mediates the biosynthesis of various drimane-type sesquiterpene esters, compounds that exhibit diverse biological activities and are widely present in eukaryotes. The pathway begins with the synthesis of the backbone drimenol by the terpene cyclase drtB using farnesyl pyrophosphate (FPP) as substrate. The cytochrome P450 monooxygenase drtD is then responsible for the hydroxylations at C-6, C-9 and C-12, as well as the oxidation of hydroxyl groups at C-6 and C-11 to a ketone and an aldehyde, respectively. Then, the biosynthesis can go in two directions, either the hydroxylated drimenol is further hydroxylated at C-2 and C-3 by an enzyme(s) not associated with the drt cluster, or the FAD-binding oxidoreductase drtC further oxidizes C-11 or C-12 to form the butyrolactone ring. DrtB, drtD and drtC are solely responsible for the formation of the different drimane structures observed during drimane sesquiterpenes biosynthesis. The polyketide synthase drtA synthesizes different lengths (C6 and C8) of PKS chains, which are then oxidized to varying degrees by the short-chain dehydrogenase drtF. Finally, these PKS chains are transferred onto drimane sesquiterpenes by the acyltransferase drtE, forming the sesquiterpene esters. In addition to the different fatty acyl-CoA chains produced by drtA, drtE is also able to use cinnamoyl-CoA as a substrate. The protein is Short-chain dehydrogenase/reductase drtF of Aspergillus calidoustus.